A 357-amino-acid polypeptide reads, in one-letter code: MKFVDEAEIQVIAGNGGDGCVSFRREKFIPLGGPDGGDGGDGGSVWLVADENLNTLVDFRHERIFKAQRGVNGMGQQMYGKAGQDKIISVPIGTVVINVQTDEVIGDMVRHGDRLLVAKGGTGGLGNMHFKSSINRAPRQARPGEQGEERTLKLELKLLADIGMLGFPNVGKSTFIRAVSAATPKVADYPFTTLYPNLGVVKIEAYSSFVIADVPGLIEGAADGVGLGMQFLRHLQRTKLLLHMVDISATADAYGNEKVGVGLLPIEQVRKLEIELERHDPALLDKPRWLVLNKADLMPQEEAQALAEALIAELRWTAPWYLVSAVSREGTWPIMKSAMTLFEHQREVAAEQRVSSR.

Residues 1-159 (MKFVDEAEIQ…RTLKLELKLL (159 aa)) enclose the Obg domain. The 184-residue stretch at 160–343 (ADIGMLGFPN…IMKSAMTLFE (184 aa)) folds into the OBG-type G domain. Residues 166–173 (GFPNVGKS), 191–195 (FTTLY), 213–216 (DVPG), 293–296 (NKAD), and 324–326 (SAV) each bind GTP. 2 residues coordinate Mg(2+): Ser173 and Thr193.

The protein belongs to the TRAFAC class OBG-HflX-like GTPase superfamily. OBG GTPase family. As to quaternary structure, monomer. Mg(2+) is required as a cofactor.

The protein localises to the cytoplasm. In terms of biological role, an essential GTPase which binds GTP, GDP and possibly (p)ppGpp with moderate affinity, with high nucleotide exchange rates and a fairly low GTP hydrolysis rate. Plays a role in control of the cell cycle, stress response, ribosome biogenesis and in those bacteria that undergo differentiation, in morphogenesis control. The chain is GTPase Obg from Xylella fastidiosa (strain M23).